The primary structure comprises 187 residues: Ribosome-recycling factor (187 aa).

This sequence belongs to the RRF family.

The protein resides in the cytoplasm. In terms of biological role, responsible for the release of ribosomes from messenger RNA at the termination of protein biosynthesis. May increase the efficiency of translation by recycling ribosomes from one round of translation to another. In Bradyrhizobium sp. (strain ORS 278), this protein is Ribosome-recycling factor.